We begin with the raw amino-acid sequence, 1218 residues long: ATP-dependent helicase/deoxyribonuclease subunit B (1218 aa).

The region spanning 1–279 (MRFIVGRAGT…VFLTETHRFE (279 aa)) is the UvrD-like helicase ATP-binding domain. An ATP-binding site is contributed by 6–13 (GRAGTGKS). The UvrD-like helicase C-terminal domain occupies 281–588 (AGLKHLERFY…LVGSLDRSRN (308 aa)). A [4Fe-4S] cluster-binding site is contributed by cysteine 786. Residues 987-1006 (LAEGSKGSEGSEGSEDSEDS) are disordered. Residues cysteine 1126, cysteine 1129, and cysteine 1135 each coordinate [4Fe-4S] cluster. The span at 1160–1169 (RVQSQDSEQY) shows a compositional bias: polar residues. The interval 1160-1218 (RVQSQDSEQYPEQHPPTSVPGETSRRALQKDGGNSPRGQELIWLGEDEAGAGKEDDGHE) is disordered. Over residues 1209–1218 (GAGKEDDGHE) the composition is skewed to basic and acidic residues.

Belongs to the helicase family. AddB/RexB type 1 subfamily. Heterodimer of AddA and AddB. It depends on Mg(2+) as a cofactor. [4Fe-4S] cluster serves as cofactor.

In terms of biological role, the heterodimer acts as both an ATP-dependent DNA helicase and an ATP-dependent, dual-direction single-stranded exonuclease. Recognizes the chi site generating a DNA molecule suitable for the initiation of homologous recombination. The AddB subunit has 5' -&gt; 3' nuclease activity but not helicase activity. The chain is ATP-dependent helicase/deoxyribonuclease subunit B from Desulfitobacterium hafniense (strain DSM 10664 / DCB-2).